The primary structure comprises 321 residues: Small ribosomal subunit protein mS43 (321 aa).

Residues 1 to 13 (MLRFTGARAIRKY) constitute a mitochondrion transit peptide.

Belongs to the mitochondrion-specific ribosomal protein mS43 family. Component of the mitochondrial small ribosomal subunit (mt-SSU). Mature yeast 74S mitochondrial ribosomes consist of a small (37S) and a large (54S) subunit. The 37S small subunit contains a 15S ribosomal RNA (15S mt-rRNA) and 34 different proteins. The 54S large subunit contains a 21S rRNA (21S mt-rRNA) and 46 different proteins. mS43 forms a heterodimer with mS42, building a large protuberance adjacent to the mRNA channel exit in the mt-SSU body.

The protein resides in the mitochondrion. Component of the mitochondrial ribosome (mitoribosome), a dedicated translation machinery responsible for the synthesis of mitochondrial genome-encoded proteins, including at least some of the essential transmembrane subunits of the mitochondrial respiratory chain. The mitoribosomes are attached to the mitochondrial inner membrane and translation products are cotranslationally integrated into the membrane. The sequence is that of Small ribosomal subunit protein mS43 (MRP1) from Saccharomyces cerevisiae (strain ATCC 204508 / S288c) (Baker's yeast).